A 161-amino-acid polypeptide reads, in one-letter code: Cyclic pyranopterin monophosphate synthase (161 aa).

Substrate is bound by residues 75–77 (LCH) and 113–114 (ME). Residue D128 is part of the active site.

It belongs to the MoaC family. As to quaternary structure, homohexamer; trimer of dimers.

It carries out the reaction (8S)-3',8-cyclo-7,8-dihydroguanosine 5'-triphosphate = cyclic pyranopterin phosphate + diphosphate. It participates in cofactor biosynthesis; molybdopterin biosynthesis. In terms of biological role, catalyzes the conversion of (8S)-3',8-cyclo-7,8-dihydroguanosine 5'-triphosphate to cyclic pyranopterin monophosphate (cPMP). This Edwardsiella ictaluri (strain 93-146) protein is Cyclic pyranopterin monophosphate synthase.